The sequence spans 201 residues: uncharacterized protein (201 aa).

The signal sequence occupies residues 1–28; it reads MMTFKNLRYGLSSSVVLAASLFSVLSYA.

The protein belongs to the fimbrial protein family.

The protein resides in the fimbrium. In terms of biological role, part of the yadCKLM-htrE-yadVN fimbrial operon. Could contribute to adhesion to various surfaces in specific environmental niches. This is an uncharacterized protein from Escherichia coli (strain K12).